The sequence spans 351 residues: Methionine import ATP-binding protein MetN (351 aa).

The ABC transporter domain maps to 2-238 (IKLNHINKTY…PKHPITRELI (237 aa)). An ATP-binding site is contributed by 35–42 (GYSGAGKS).

The protein belongs to the ABC transporter superfamily. Methionine importer (TC 3.A.1.24) family. As to quaternary structure, the complex is composed of two ATP-binding proteins (MetN), two transmembrane proteins (MetI) and a solute-binding protein (MetQ).

The protein localises to the cell inner membrane. The enzyme catalyses L-methionine(out) + ATP + H2O = L-methionine(in) + ADP + phosphate + H(+). It carries out the reaction D-methionine(out) + ATP + H2O = D-methionine(in) + ADP + phosphate + H(+). Part of the ABC transporter complex MetNIQ involved in methionine import. Responsible for energy coupling to the transport system. The protein is Methionine import ATP-binding protein MetN of Helicobacter hepaticus (strain ATCC 51449 / 3B1).